The primary structure comprises 161 residues: Large ribosomal subunit protein bL9 (161 aa).

This sequence belongs to the bacterial ribosomal protein bL9 family.

Its function is as follows. Binds to the 23S rRNA. This Blochmanniella floridana protein is Large ribosomal subunit protein bL9.